A 260-amino-acid chain; its full sequence is tRNA pseudouridine synthase A (260 aa).

The active-site Nucleophile is aspartate 51. Substrate is bound at residue tyrosine 109.

It belongs to the tRNA pseudouridine synthase TruA family. In terms of assembly, homodimer.

The enzyme catalyses uridine(38/39/40) in tRNA = pseudouridine(38/39/40) in tRNA. Functionally, formation of pseudouridine at positions 38, 39 and 40 in the anticodon stem and loop of transfer RNAs. This Albidiferax ferrireducens (strain ATCC BAA-621 / DSM 15236 / T118) (Rhodoferax ferrireducens) protein is tRNA pseudouridine synthase A.